The primary structure comprises 524 residues: Calcium-dependent protein kinase 1 (524 aa).

Residues 1–34 are disordered; that stretch reads MGCSQSSNVKDFKTRRSKFTNGNNYGKSGNNKNS. The N-myristoyl glycine moiety is linked to residue Gly-2. The S-palmitoyl cysteine moiety is linked to residue Cys-3. Residues 10 to 20 carry the Basic cluster involved in membrane binding motif; sequence KDFKTRRSKFT. A phosphoserine; by autocatalysis mark is found at Ser-17, Ser-28, and Ser-34. Positions 21–32 are enriched in low complexity; that stretch reads NGNNYGKSGNNK. Positions 56-325 constitute a Protein kinase domain; sequence YFKVRKLGSG…AKEALNSKWI (270 aa). ATP-binding positions include 62–70 and Lys-85; that span reads LGSGAYGEV. Ser-64 carries the post-translational modification Phosphoserine; by PKG; by autocatalysis. Residue Thr-100 is modified to Phosphothreonine; by autocatalysis. Ser-118 is modified (phosphoserine; by autocatalysis). Asp-191 functions as the Proton acceptor in the catalytic mechanism. Ser-217 is modified (phosphoserine). Phosphoserine; by autocatalysis is present on Ser-220. Thr-231 is subject to Phosphothreonine; by PKG; by autocatalysis. Ser-335 bears the Phosphoserine; by autocatalysis mark. The J domain autoinhibitory motif motif lies at 346–353; sequence NMRKFEGS. The tract at residues 346–364 is j domain; it reads NMRKFEGSQKLAQAAILFI. The J domain interacts with the EF-hand domains motif lies at 354–364; sequence QKLAQAAILFI. EF-hand domains follow at residues 372–407, 416–451, 452–487, and 488–521; these read EERKELTDIFKKLDKNGDGQLDKKELIEGYNILRSF, NVEEEVDNILKEVDFDKNGYIEYSEFISVCMDKQIL, FSEERLRDAFNLFDTDKSGKITKEELANLFGLTSIS, and EQMWNEVLGEADKNKDNMIDFDEFVNMMHKICDN. 20 residues coordinate Ca(2+): Asp-385, Asn-387, Asp-389, Gln-391, Glu-396, Asp-429, Asp-431, Asn-433, Tyr-435, Glu-440, Asp-465, Asp-467, Ser-469, Lys-471, Glu-476, Asp-499, Asn-501, Asp-503, Met-505, and Glu-510.

This sequence belongs to the protein kinase superfamily. Ser/Thr protein kinase family. CDPK subfamily. As to quaternary structure, monomer. Forms a high molecular weight (250 and 400 kDa) complex. Forms a complex composed of CDPK1, PKA regulatory subunit PKAr and 14-3-3I; the complex is formed in merozoites in response to low extracellular level of K(+) and may play a role in microneme secretion. Interacts (when phosphorylated) with 14-3-3I in a Ca(2+)-independent manner; the interaction does not regulate CDPK1 catalytic activity but is required for merozoite invasion of host erythrocytes. Interacts with PKA regulatory subunit PKAr; in a Ca(2+)-dependent manner. Interacts with SERA5 p50 in the late schizont stage. Interacts with inner membrane complex protein IMC1g in late schizonts. Interacts with rhoptry protein RhopH3 in merozoites. Mg(2+) is required as a cofactor. Myristoylated. Myristoylation, palmitoylation and the basic cluster motif are required for the localization to the parasitophorous vacuole membrane. Post-translationally, palmitoylated. Palmitoylation increases in merozoites in response to low level of extracellular K(+) in the host blood. Myristoylation, palmitoylation and the basic cluster motif are required for the localization to the parasitophorous vacuole membrane. In terms of processing, phosphorylation at Ser-64 occurs at late schizont stage and regulates CDPK1 protein-protein interaction. Phosphorylated at Ser-28, Ser-34 and Ser-64 in merozoites in response to low extracellular level of K(+). Phosphorylation at Thr-231 may regulate CDPK1 kinase activity. Phosphorylation increases in response to an increase in intracellular Ca(2+) levels. Autophosphorylated in vitro. Autophosphorylation does not affect membrane localization in vitro.

Its subcellular location is the membrane. It localises to the cell membrane. It is found in the parasitophorous vacuole membrane. The protein resides in the cytoplasm. The protein localises to the cell projection. Its subcellular location is the cilium. It localises to the flagellum. It is found in the host cell membrane. The enzyme catalyses L-seryl-[protein] + ATP = O-phospho-L-seryl-[protein] + ADP + H(+). It carries out the reaction L-threonyl-[protein] + ATP = O-phospho-L-threonyl-[protein] + ADP + H(+). Activated by calcium. Upon calcium binding to the EF-hand domains, the C-terminus of the junction domain (J domain) undergoes a conformational change which results in the dissociation of the pseudo-substrate inhibitory motif from the catalytic domain. This, in turn may facilitate the autophosphorylation of the activation loop at Thr-231, which leads to the kinase activation. May be negatively regulated by PKA-mediated phosphorylation. Inhibited by purfalcamine. In terms of biological role, calcium-dependent protein kinase which acts as a sensor and effector of intracellular Ca(2+) levels probably in part downstream of cGMP-activated PKG kinase. By phosphorylating various proteins, required for microneme secretion and thus merozoite egress from and invasion of host erythrocytes. During gametogenesis, essential for the development of both male and female gametes. Phosphorylates SERA5 p50 which enhances SERA5 p50 protease activity; however, SERA5 p50 protease activity has been shown in other studies to be controversial. Probably by phosphorylating SERA5 p50, plays a role in merozoite egress from host erythrocytes. Probably prior or during merozoite invasion of host erythrocytes, phosphorylates rhoptry protein RhopH3 which is required for RhopH3 localization to rhoptries and for its secretion. Probably in late schizonts, phosphorylates myosin A tail domain-interacting protein MTIP and glideosome-associated protein 45 GAP45, both of which are components of the motor complex that generates the force required by the parasite to invade host cells. In late schizonts, phosphorylates inner membrane complex protein IMC1g. In late schizonts, phosphorylates PKA regulatory subunit PKAr in a calcium-dependent manner, which may contribute to the dissociation of regulatory PKAr and catalytic PKAc subunits and promote the activation of PKAc. May phosphorylate raf kinase inhibitory protein RKIP which in turn may regulate CDPK1 catalytic activity. May phosphorylate proteins of the host erythrocyte membranes. The protein is Calcium-dependent protein kinase 1 of Plasmodium falciparum (isolate 3D7).